Reading from the N-terminus, the 548-residue chain is Chaperonin GroEL 1 (548 aa).

ATP contacts are provided by residues 30–33 (TLGP), Lys51, 87–91 (DGTTT), Gly415, 479–481 (NAA), and Asp495.

The protein belongs to the chaperonin (HSP60) family. Forms a cylinder of 14 subunits composed of two heptameric rings stacked back-to-back. Interacts with the co-chaperonin GroES.

The protein resides in the cytoplasm. It carries out the reaction ATP + H2O + a folded polypeptide = ADP + phosphate + an unfolded polypeptide.. Functionally, together with its co-chaperonin GroES, plays an essential role in assisting protein folding. The GroEL-GroES system forms a nano-cage that allows encapsulation of the non-native substrate proteins and provides a physical environment optimized to promote and accelerate protein folding. This Vibrio harveyi (Beneckea harveyi) protein is Chaperonin GroEL 1.